The following is a 190-amino-acid chain: RNA pyrophosphohydrolase (190 aa).

In terms of domain architecture, Nudix hydrolase spans 6–149; the sequence is GYRPNVGIVL…KRGVYARALC (144 aa). A Nudix box motif is present at residues 38 to 59; it reads GGMHSDETPVEAMYRELNEEIG.

This sequence belongs to the Nudix hydrolase family. RppH subfamily. A divalent metal cation serves as cofactor.

Accelerates the degradation of transcripts by removing pyrophosphate from the 5'-end of triphosphorylated RNA, leading to a more labile monophosphorylated state that can stimulate subsequent ribonuclease cleavage. This Xylella fastidiosa (strain M12) protein is RNA pyrophosphohydrolase.